Consider the following 105-residue polypeptide: Met repressor (105 aa).

The protein belongs to the MetJ family. In terms of assembly, homodimer.

The protein resides in the cytoplasm. Functionally, this regulatory protein, when combined with SAM (S-adenosylmethionine) represses the expression of the methionine regulon and of enzymes involved in SAM synthesis. This Photorhabdus laumondii subsp. laumondii (strain DSM 15139 / CIP 105565 / TT01) (Photorhabdus luminescens subsp. laumondii) protein is Met repressor.